We begin with the raw amino-acid sequence, 128 residues long: Small ribosomal subunit protein eS8 (128 aa).

It belongs to the eukaryotic ribosomal protein eS8 family. Part of the 30S ribosomal subunit.

This is Small ribosomal subunit protein eS8 from Metallosphaera sedula (strain ATCC 51363 / DSM 5348 / JCM 9185 / NBRC 15509 / TH2).